The chain runs to 415 residues: Acrosin (415 aa).

The N-terminal stretch at 1–16 is a signal peptide; it reads MLPTAVLLVLAVSVAA. N-linked (GlcNAc...) asparagine glycosylation occurs at Asn19. Intrachain disulfides connect Cys22-Cys152, Cys26-Cys160, Cys71-Cys87, Cys175-Cys244, Cys207-Cys223, and Cys234-Cys264. The Peptidase S1 domain occupies 40–288; sequence VVGGMSAEPG…YLNWIASKIG (249 aa). Residues His86 and Asp140 each act as charge relay system in the active site. Asn208 carries N-linked (GlcNAc...) asparagine glycosylation. The active-site Charge relay system is the Ser238. Disordered stretches follow at residues 296 to 376 and 395 to 415; these read QLGT…PPQA and FSSG…LPAS. Composition is skewed to pro residues over residues 300 to 312 and 328 to 367; these read PPRP…PVRP and PPGP…PPPQ. The propeptide at 339 to 415 is pro-rich; that stretch reads PRPPAPPPAP…TTDLQELPAS (77 aa). The segment covering 395 to 409 has biased composition (polar residues); the sequence is FSSGRSYYETETTDL.

Belongs to the peptidase S1 family. As to quaternary structure, heavy chain (catalytic) and a light chain linked by two disulfide bonds. Forms a heterodimer with SERPINA5.

The catalysed reaction is Preferential cleavage: Arg-|-Xaa, Lys-|-Xaa.. Its activity is regulated as follows. Inhibited by SERPINA5. In terms of biological role, acrosin is the major protease of mammalian spermatozoa. It is a serine protease of trypsin-like cleavage specificity, it is synthesized in a zymogen form, proacrosin and stored in the acrosome. This chain is Acrosin (ACR), found in Sus scrofa (Pig).